A 631-amino-acid polypeptide reads, in one-letter code: Phosphomethylpyrimidine synthase (631 aa).

Substrate contacts are provided by residues Asn-239, Met-268, Tyr-297, His-333, 353-355 (SRG), 394-397 (DGLR), and Glu-433. Residue His-437 participates in Zn(2+) binding. Position 460 (Tyr-460) interacts with substrate. His-501 is a binding site for Zn(2+). Residues Cys-581, Cys-584, and Cys-589 each coordinate [4Fe-4S] cluster.

It belongs to the ThiC family. Homodimer. It depends on [4Fe-4S] cluster as a cofactor.

It catalyses the reaction 5-amino-1-(5-phospho-beta-D-ribosyl)imidazole + S-adenosyl-L-methionine = 4-amino-2-methyl-5-(phosphooxymethyl)pyrimidine + CO + 5'-deoxyadenosine + formate + L-methionine + 3 H(+). Its pathway is cofactor biosynthesis; thiamine diphosphate biosynthesis. Functionally, catalyzes the synthesis of the hydroxymethylpyrimidine phosphate (HMP-P) moiety of thiamine from aminoimidazole ribotide (AIR) in a radical S-adenosyl-L-methionine (SAM)-dependent reaction. The chain is Phosphomethylpyrimidine synthase from Salmonella schwarzengrund (strain CVM19633).